A 357-amino-acid chain; its full sequence is Peptide chain release factor 1 (357 aa).

Gln-236 carries the N5-methylglutamine modification.

Belongs to the prokaryotic/mitochondrial release factor family. Methylated by PrmC. Methylation increases the termination efficiency of RF1.

Its subcellular location is the cytoplasm. Its function is as follows. Peptide chain release factor 1 directs the termination of translation in response to the peptide chain termination codons UAG and UAA. The sequence is that of Peptide chain release factor 1 from Mycobacterium marinum (strain ATCC BAA-535 / M).